The following is a 333-amino-acid chain: MKIAVDAMGGDNAPQAIVEGVMLAKQDFPDIEFQLYGKEAEIKKYITDEKNITIIHTDEKIASDDEPVKAIRRKKTASMVLAAQAVKNGEADAIFSAGNTGALLAAGLFIVGRIKNVERPGLMSTLPVMGEPDKGFDMLDLGANADNKPEHLVQYAVLGSFYAEKVRNVQNPRVGLLNNGTEETKGSELTKKAFELLAADETINFVGNVEARELLNGVADVVVTDGFTGNAVLKSIEGTAMNMMSLLKTAILSEGVKGKMGALLLKNALHGMKDEMDYSKHGGAVLFGLKAPVIKTHGATGPDAVRYTIRQIHTMLETQVVPQLVEYYEGKAE.

It belongs to the PlsX family. Homodimer. Probably interacts with PlsY.

It is found in the cytoplasm. The catalysed reaction is a fatty acyl-[ACP] + phosphate = an acyl phosphate + holo-[ACP]. It participates in lipid metabolism; phospholipid metabolism. In terms of biological role, catalyzes the reversible formation of acyl-phosphate (acyl-PO(4)) from acyl-[acyl-carrier-protein] (acyl-ACP). This enzyme utilizes acyl-ACP as fatty acyl donor, but not acyl-CoA. This Enterococcus faecalis (strain ATCC 700802 / V583) protein is Phosphate acyltransferase.